A 113-amino-acid polypeptide reads, in one-letter code: UPF0122 protein MCAP_0480 (113 aa).

The protein belongs to the UPF0122 family.

Functionally, might take part in the signal recognition particle (SRP) pathway. This is inferred from the conservation of its genetic proximity to ftsY/ffh. May be a regulatory protein. This Mycoplasma capricolum subsp. capricolum (strain California kid / ATCC 27343 / NCTC 10154) protein is UPF0122 protein MCAP_0480.